The primary structure comprises 450 residues: tRNA-2-methylthio-N(6)-dimethylallyladenosine synthase (450 aa).

An MTTase N-terminal domain is found at 17-131 (KKFFVKTYGC…LNHVLDEVLA (115 aa)). [4Fe-4S] cluster-binding residues include cysteine 26, cysteine 62, cysteine 94, cysteine 168, cysteine 172, and cysteine 175. The 232-residue stretch at 154–385 (REDQIKAYVS…LQLQDTIYMK (232 aa)) folds into the Radical SAM core domain. One can recognise a TRAM domain in the interval 388 to 450 (QAFLGQTVEV…SHQTLLGDLQ (63 aa)).

The protein belongs to the methylthiotransferase family. MiaB subfamily. As to quaternary structure, monomer. [4Fe-4S] cluster serves as cofactor.

It is found in the cytoplasm. The enzyme catalyses N(6)-dimethylallyladenosine(37) in tRNA + (sulfur carrier)-SH + AH2 + 2 S-adenosyl-L-methionine = 2-methylsulfanyl-N(6)-dimethylallyladenosine(37) in tRNA + (sulfur carrier)-H + 5'-deoxyadenosine + L-methionine + A + S-adenosyl-L-homocysteine + 2 H(+). Functionally, catalyzes the methylthiolation of N6-(dimethylallyl)adenosine (i(6)A), leading to the formation of 2-methylthio-N6-(dimethylallyl)adenosine (ms(2)i(6)A) at position 37 in tRNAs that read codons beginning with uridine. The polypeptide is tRNA-2-methylthio-N(6)-dimethylallyladenosine synthase (Protochlamydia amoebophila (strain UWE25)).